The chain runs to 380 residues: Apelin receptor (380 aa).

The Extracellular portion of the chain corresponds to 1–30 (MEEGGDFDNYYGADNQSECEYTDWKSSGAL). The N-linked (GlcNAc...) asparagine glycan is linked to Asn-15. Cystine bridges form between Cys-19-Cys-281 and Cys-102-Cys-181. The chain crosses the membrane as a helical span at residues 31–54 (IPAIYMLVFLLGTTGNGLVLWTVF). Over 55 to 64 (RSSREKRRSA) the chain is Cytoplasmic. Residues 65–86 (DIFIASLAVADLTFVVTLPLWA) traverse the membrane as a helical segment. The Extracellular segment spans residues 87-99 (TYTYRDYDWPFGT). The helical transmembrane segment at 100–125 (FFCKLSSYLIFVNMYASVFCLTGLSF) threads the bilayer. At 126–146 (DRYLAIVRPVANARLRLRVSG) the chain is on the cytoplasmic side. The chain crosses the membrane as a helical span at residues 147–164 (AVATAVLWVLAALLAMPV). At 165–198 (MVLRTTGDLENTTKVQCYMDYSMVATVSSEWAWE) the chain is on the extracellular side. Asn-175 is a glycosylation site (N-linked (GlcNAc...) asparagine). Residues 199-223 (VGLGVSSTTVGFVVPFTIMLTCYFF) traverse the membrane as a helical segment. The Cytoplasmic segment spans residues 224–246 (IAQTIAGHFRKERIEGLRKRRRL). Residues 247-270 (LSIIVVLVVTFALCWMPYHLVKTL) traverse the membrane as a helical segment. Residues 271–289 (YMLGSLLHWPCDFDLFLMN) lie on the Extracellular side of the membrane. A helical transmembrane segment spans residues 290 to 312 (IFPYCTCISYVNSCLNPFLYAFF). Residues 313–380 (DPRFRQACTS…PYSQETLVVD (68 aa)) are Cytoplasmic-facing. Residues 342-351 (KSASYSSGHS) are compositionally biased toward low complexity. The tract at residues 342 to 380 (KSASYSSGHSQGPGPNMGKGGEQMHEKSIPYSQETLVVD) is disordered. Polar residues predominate over residues 371 to 380 (PYSQETLVVD).

It belongs to the G-protein coupled receptor 1 family. In terms of assembly, homodimer; dimerization inhibits APLNR-mediated G protein and beta-arrestin signaling pathways compared to monomeric APLNR. Expressed in heart, brain, kidney, stomach, spleen, thymus, lung, ovary, small intestine and colon, adipose tissues and pancreas. Expressed in glial cells, astrocytes and neuronal subpopulations. Expressed in embryonic (ESCs) and induced (iPSCs) pluripotent stem cells.

It localises to the cell membrane. Its function is as follows. G protein-coupled receptor for peptide hormones apelin (APLN) and apelin receptor early endogenous ligand (APELA/ELA), that plays a role in the regulation of normal cardiovascular function and fluid homeostasis. When acting as apelin receptor, activates both G(i) protein pathway that inhibits adenylate cyclase activity, and the beta-arrestin pathway that promotes internalization of the receptor. APLNR/APJ also functions as mechanoreceptor that is activated by pathological stimuli in a G-protein-independent fashion to induce beta-arrestin signaling, hence eliciting cardiac hypertrophy. However, the presence of apelin ligand blunts cardiac hypertrophic induction from APLNR/APJ on response to pathological stimuli. Plays a key role in early development such as gastrulation, blood vessels formation and heart morphogenesis by acting as a APELA receptor. May promote angioblast migration toward the embryonic midline, i.e. the position of the future vessel formation, during vasculogenesis. Promotes sinus venosus (SV)-derived endothelial cells migration into the developing heart to promote coronary blood vessel development. Also plays a role in various processes in adults such as regulation of blood vessel formation, blood pressure, heart contractility and heart failure. (Microbial infection) Alternative coreceptor with CD4 for HIV-1 infection; may be involved in the development of AIDS dementia. The protein is Apelin receptor of Homo sapiens (Human).